A 287-amino-acid polypeptide reads, in one-letter code: MYRDSPLMSTPVANDSRSDEGPSGKLSPTCLFPSFTCDFLDGDSSFECCSIDPLTGSHYICRRSPRLLTNGYYIWTEDSFFCDPDGHITLNPSQTSVMYKENLVRIFRKKKRTHRSLSSLLDPRASKSWLHGSIFGEVDSLPSEDLWLDGIRSLGSDLDCSLSDGWESQKPVTDTSESSSSGYILPQSLRESSQSSSLQLQVKASGHFEKNSLVHSRAGLMHKVSFQAILLAVCLVISAYTRWFVGGELASIFTCALLITIAYVVKSLFLNLARYFKATSCARFDST.

A disordered region spans residues 1 to 25; sequence MYRDSPLMSTPVANDSRSDEGPSGK. The next 2 membrane-spanning stretches (helical) occupy residues 218–238 and 244–264; these read AGLMHKVSFQAILLAVCLVIS and FVGGELASIFTCALLITIAYV.

This sequence belongs to the TMEM71 family.

Its subcellular location is the membrane. This is Transmembrane protein 71 (Tmem71) from Mus musculus (Mouse).